The primary structure comprises 202 residues: uncharacterized protein (202 aa).

This is an uncharacterized protein from Galliformes (FAdV-1).